The chain runs to 197 residues: Putative glutathione-dependent formaldehyde-activating enzyme (197 aa).

The region spanning 22-171 is the CENP-V/GFA domain; sequence FPGGKLYCHC…LKSLGLENYD (150 aa). Cys29, Cys31, Cys50, Cys52, Cys55, Cys97, and Cys100 together coordinate Zn(2+).

It belongs to the Gfa family. It depends on Zn(2+) as a cofactor.

It carries out the reaction S-(hydroxymethyl)glutathione = glutathione + formaldehyde. It participates in one-carbon metabolism; formaldehyde degradation; formate from formaldehyde (glutathione route): step 1/3. Catalyzes the condensation of formaldehyde and glutathione to S-hydroxymethylglutathione. The protein is Putative glutathione-dependent formaldehyde-activating enzyme of Emericella nidulans (strain FGSC A4 / ATCC 38163 / CBS 112.46 / NRRL 194 / M139) (Aspergillus nidulans).